The primary structure comprises 206 residues: Large ribosomal subunit protein uL4 (206 aa).

The tract at residues 63–93 (MYKQKGTGRARHHSARAPQFRGGGKAHGPVV) is disordered. Over residues 64–77 (YKQKGTGRARHHSA) the composition is skewed to basic residues.

Belongs to the universal ribosomal protein uL4 family. Part of the 50S ribosomal subunit.

Its function is as follows. One of the primary rRNA binding proteins, this protein initially binds near the 5'-end of the 23S rRNA. It is important during the early stages of 50S assembly. It makes multiple contacts with different domains of the 23S rRNA in the assembled 50S subunit and ribosome. Functionally, forms part of the polypeptide exit tunnel. This is Large ribosomal subunit protein uL4 from Sinorhizobium fredii (strain NBRC 101917 / NGR234).